The sequence spans 136 residues: Histone H3.3 (136 aa).

The tract at residues 1 to 43 (MARTKQTARKSTGGKAPRKQLATKAARKSAPSTGGVKKPHRYR) is disordered. An N6,N6,N6-trimethyllysine; alternate modification is found at K5. K5 is modified (N6,N6-dimethyllysine; alternate). K5 and K10 each carry N6-methyllysine; alternate. The residue at position 10 (K10) is an N6-acetyllysine; alternate. Phosphoserine is present on S11. Position 15 is an N6,N6-dimethyllysine; alternate (K15). An N6-acetyllysine; alternate mark is found at K15, K19, K24, K28, and K37. K19, K24, K28, and K37 each carry N6-methyllysine; alternate. K28 and K37 each carry N6,N6,N6-trimethyllysine; alternate. Residues K28 and K37 each carry the N6,N6-dimethyllysine; alternate modification. N6-acetyllysine occurs at positions 57 and 65. The residue at position 80 (K80) is an N6,N6,N6-trimethyllysine; alternate. K80 bears the N6,N6-dimethyllysine; alternate mark. Position 80 is an N6-methyllysine; alternate (K80).

This sequence belongs to the histone H3 family. In terms of assembly, the nucleosome is a histone octamer containing two molecules each of H2A, H2B, H3 and H4 assembled in one H3-H4 heterotetramer and two H2A-H2B heterodimers. The octamer wraps approximately 147 bp of DNA. Post-translationally, phosphorylated at Ser-11. This is required for transcriptional activation through TBP recruitment to the promoters. Phosphorylation at Ser-11 also promotes subsequent acetylation at Lys-15. In terms of processing, mono-, di- and trimethylation of Lys-5 by the COMPASS complex activates gene expression by regulating transcription elongation and plays a role in telomere length maintenance. Lys-5 methylation enrichment correlates with transcription levels, and occurs in a 5' to 3' gradient with tri-methyl enrichment at the 5'-end of genes, shifting to di-methyl and then mono-methyl. The COMPASS mediated di and trimethylation of Lys-5 requires histone H2B monoubiquitination. Methylation of Lys-37 by SET2 represses gene expression. Methylation of Lys-80 by DOT1 is required for association of SIR proteins with telomeric regions and for telomeric silencing. Acetylation of histone H3 leads to transcriptional activation. Acetylation at Lys-15 is promoted by the phosphorylation at Ser-11. Acetylation at Lys-57 occurs predominantly in newly synthesized H3 molecule during G1, S and G2/M of the cell cycle and may be involved in DNA repair.

The protein resides in the nucleus. It is found in the chromosome. Functionally, core component of nucleosome. Nucleosomes wrap and compact DNA into chromatin, limiting DNA accessibility to the cellular machineries which require DNA as a template. Histones thereby play a central role in transcription regulation, DNA repair, DNA replication and chromosomal stability. DNA accessibility is regulated via a complex set of post-translational modifications of histones, also called histone code, and nucleosome remodeling. This is Histone H3.3 (HHT3) from Trichinella pseudospiralis (Parasitic roundworm).